The sequence spans 138 residues: Basic phospholipase A2 sistruxin B (138 aa).

The signal sequence occupies residues 1-16; it reads MRALWIVAVLLVGVEG. 7 disulfide bridges follow: cysteine 42/cysteine 131, cysteine 44/cysteine 60, cysteine 59/cysteine 111, cysteine 65/cysteine 138, cysteine 66/cysteine 104, cysteine 73/cysteine 97, and cysteine 91/cysteine 102. Ca(2+) is bound by residues tyrosine 43, glycine 45, and glycine 47. Histidine 63 is an active-site residue. Aspartate 64 provides a ligand contact to Ca(2+). Aspartate 105 is an active-site residue.

As to quaternary structure, heterodimer of an acidic subunit and a basic chain. The acidic subunit is non-toxic, without enzymatic activity and comprises 3 peptides that are cross-linked by 7 disulfide bridges. The basic subunit is toxic, has phospholipase A2 activity and is composed of a single chain. Requires Ca(2+) as cofactor. In terms of tissue distribution, expressed by the venom gland.

The protein localises to the secreted. The enzyme catalyses a 1,2-diacyl-sn-glycero-3-phosphocholine + H2O = a 1-acyl-sn-glycero-3-phosphocholine + a fatty acid + H(+). Its function is as follows. Snake venom phospholipase A2 (PLA2) that shows presynaptic neurotoxicity. PLA2 catalyzes the calcium-dependent hydrolysis of the 2-acyl groups in 3-sn-phosphoglycerides. The polypeptide is Basic phospholipase A2 sistruxin B (Sistrurus tergeminus (Western massasauga)).